The sequence spans 172 residues: Disulfide bond formation protein B (172 aa).

Over 1–11 (MNPFRWSFRAQ) the chain is Cytoplasmic. A helical membrane pass occupies residues 12–28 (FLLGFLACAGLLAYAIY). Topologically, residues 29–46 (VQLHLGLEPCPLCIFQRI) are periplasmic. C38 and C41 are oxidised to a cystine. Residues 47 to 63 (AFAALAVFFLLGALHGP) form a helical membrane-spanning segment. The Cytoplasmic portion of the chain corresponds to 64–70 (RAAAGRK). Residues 71-88 (VYGVLSFIAAGVGMGIAA) form a helical membrane-spanning segment. Residues 89–145 (RHVWVQIRPKDMMSSCGPPLSFLSETMGPFEVFRTVLTGTGDCGNIDWRFLGLSMPM) are Periplasmic-facing. A disulfide bridge links C104 with C131. A helical membrane pass occupies residues 146–164 (WSMVWFVGLALWALYAGFK). Topologically, residues 165–172 (VRRSSVHH) are cytoplasmic.

This sequence belongs to the DsbB family.

Its subcellular location is the cell inner membrane. Functionally, required for disulfide bond formation in some periplasmic proteins. Acts by oxidizing the DsbA protein. The protein is Disulfide bond formation protein B of Xanthomonas axonopodis pv. citri (strain 306).